We begin with the raw amino-acid sequence, 138 residues long: ATP synthase epsilon chain 2 (138 aa).

This sequence belongs to the ATPase epsilon chain family. In terms of assembly, F-type ATPases have 2 components, CF(1) - the catalytic core - and CF(0) - the membrane proton channel. CF(1) has five subunits: alpha(3), beta(3), gamma(1), delta(1), epsilon(1). CF(0) has three main subunits: a, b and c.

Its subcellular location is the cell inner membrane. In terms of biological role, produces ATP from ADP in the presence of a proton gradient across the membrane. This chain is ATP synthase epsilon chain 2, found in Syntrophotalea carbinolica (strain DSM 2380 / NBRC 103641 / GraBd1) (Pelobacter carbinolicus).